Consider the following 551-residue polypeptide: Thermophilic beta-amylase (551 aa).

The first 32 residues, 1–32, serve as a signal peptide directing secretion; the sequence is MIGAFKRLGQKLFLTLLTASLIFASSIVTANA. A substrate-binding site is contributed by Asp73. Glu80 is a Ca(2+) binding site. The substrate site is built by His113 and Asp121. Glu167 is a Ca(2+) binding site. Glu195 functions as the Proton donor in the catalytic mechanism. Residues Lys310, His315, and Thr353 each coordinate substrate. Glu392 (proton acceptor) is an active-site residue. Substrate is bound by residues 393–394 and Arg423; that span reads NA. Residues 448-551 form the CBM20 domain; sequence LTPNGTIPVT…TGSVTITWQN (104 aa).

Belongs to the glycosyl hydrolase 14 family. In terms of assembly, monomer. Ca(2+) is required as a cofactor.

The catalysed reaction is Hydrolysis of (1-&gt;4)-alpha-D-glucosidic linkages in polysaccharides so as to remove successive maltose units from the non-reducing ends of the chains.. This chain is Thermophilic beta-amylase, found in Thermoanaerobacterium thermosulfurigenes (Clostridium thermosulfurogenes).